The primary structure comprises 154 residues: Transcriptional repressor NrdR (154 aa).

A zinc finger spans residues 3–34 (CPFCRHPDSRVIDSRETDEGQAIRRRRSCPEC). The ATP-cone domain maps to 46-136 (LAVVKRSGVT…VYRSFESADD (91 aa)).

This sequence belongs to the NrdR family. The cofactor is Zn(2+).

In terms of biological role, negatively regulates transcription of bacterial ribonucleotide reductase nrd genes and operons by binding to NrdR-boxes. The polypeptide is Transcriptional repressor NrdR (Mycobacterium avium (strain 104)).